Consider the following 258-residue polypeptide: 5'-nucleotidase SurE (258 aa).

Residues D10, D11, S41, and N96 each contribute to the a divalent metal cation site.

It belongs to the SurE nucleotidase family. A divalent metal cation serves as cofactor.

The protein resides in the cytoplasm. It carries out the reaction a ribonucleoside 5'-phosphate + H2O = a ribonucleoside + phosphate. Its function is as follows. Nucleotidase that shows phosphatase activity on nucleoside 5'-monophosphates. This Sorangium cellulosum (strain So ce56) (Polyangium cellulosum (strain So ce56)) protein is 5'-nucleotidase SurE.